An 84-amino-acid chain; its full sequence is Envelope small membrane protein (84 aa).

Topologically, residues 1–18 (MFMADAYLADTVWYVGQI) are virion surface. A helical membrane pass occupies residues 19-39 (IFIVAICLLVIIVVVAFLATF). The Intravirion segment spans residues 40-80 (KLCIQLCGMCNTLVLSPSIYVFNRGRQFYEFYNDVKPPVLD).

The protein belongs to the betacoronaviruses E protein family. As to quaternary structure, homopentamer. Interacts with membrane protein M in the budding compartment of the host cell, which is located between endoplasmic reticulum and the Golgi complex. Interacts with Nucleoprotein.

It is found in the host Golgi apparatus membrane. Its function is as follows. Plays a central role in virus morphogenesis and assembly. Acts as a viroporin and self-assembles in host membranes forming pentameric protein-lipid pores that allow ion transport. Also plays a role in the induction of apoptosis. The polypeptide is Envelope small membrane protein (Porcine hemagglutinating encephalomyelitis virus (strain 67N) (HEV-67N)).